The primary structure comprises 169 residues: MATVGDLKAVVKDTLEKRGVMGQLKARVRAEVFEALDDRSEPKPVLSPENLLINELIREYLAFNKYSYTSSVLTAETGLSEVPLDRSFLTKELNVVEDLNSQSVPILYGIVAHFLKEHEDGPCQKVEKVSTENHTFRNIPRGRNTKDTHSGPVQLTQTSTEDWHQRRHR.

A necessary and sufficient for homooligomerization and localization to centrosomes and pericentriolar satellites region spans residues 1 to 104; the sequence is MATVGDLKAV…VVEDLNSQSV (104 aa). Residues 49-81 form the LisH domain; it reads ENLLINELIREYLAFNKYSYTSSVLTAETGLSE. The segment at 135-169 is disordered; the sequence is TFRNIPRGRNTKDTHSGPVQLTQTSTEDWHQRRHR. The segment covering 151–160 has biased composition (polar residues); sequence GPVQLTQTST.

This sequence belongs to the CEP43 family. In terms of assembly, homooligomer; probably required for localization to centrosomes.

The protein localises to the cell projection. Its subcellular location is the cilium. The protein resides in the cytoplasm. It localises to the cytoskeleton. It is found in the cilium basal body. The protein localises to the microtubule organizing center. Its subcellular location is the centrosome. The protein resides in the cytoplasmic granule. It localises to the centriolar satellite. Its function is as follows. Involved in the biogenesis of cilia. Required for the recruitment of PLK1 to centrosomes and S phase progression. The sequence is that of Centrosomal protein 20 (Cep20) from Xenopus laevis (African clawed frog).